Reading from the N-terminus, the 61-residue chain is [Thr6]-bradykinyl-Val,Asp (61 aa).

An N-terminal signal peptide occupies residues 1–22 (MSFLKKSLFLVLFLGFVSFSIC). A propeptide spanning residues 23–50 (EEEKREDEEEENEREENKESEEKRNQEE) is cleaved from the precursor. The segment at 24-61 (EEKREDEEEENEREENKESEEKRNQEERPPGFTPFRVD) is disordered. A compositionally biased stretch (acidic residues) spans 26-36 (KREDEEEENER). Positions 37–52 (EENKESEEKRNQEERP) are enriched in basic and acidic residues. 4-hydroxyproline; in form [Hyp3,Thr6]-bradykinyl-Val,Asp and [Hyp3,Thr6]-bradykinin is present on Pro-53.

Belongs to the frog skin active peptide (FSAP) family. Bradykinin-related peptide subfamily. As to expression, expressed by the skin glands.

The protein localises to the secreted. Its function is as follows. Induces relaxation of rat smooth muscle from tail artery (EC(50)=16.8 nM) and contraction of that from ileum (EC(50)=205 nM), urinary bladder (EC(50)=895 nM) and uterus (EC(50)=60.3 nM). Binds to both bradykinin receptor B1 (BDKRB1) and B2 (BDKRB2). [Hyp3,Thr6]-bradykinin: Induces relaxation of rat smooth muscle from tail artery (EC(50)=56.7 nM) and contraction of that from ileum (EC(50)=588 nM), urinary bladder (EC(50)=4.6 uM) and uterus (EC(50)=3.9 nM). Binds to both bradykinin receptor B1 (BDKRB1) and B2 (BDKRB2). In arterial smooth muscle, the effect via BDKRB1 is stronger, in uterus, ileum and urinary bladder the effect via BDKRB2. In terms of biological role, induces relaxation of rat smooth muscle from tail artery (EC(50)=10.8 nM) and contraction of that from ileum (EC(50)=645 nM), urinary bladder (EC(50)=1.1 uM) and uterus (EC(50)=1.2 uM). Binds to both bradykinin receptor B1 (BDKRB1) and B2 (BDKRB2). Apart from uterus smooth muscle, the effect via BDKRB2 is stronger. Functionally, [Hyp3,Thr6]-bradykinyl-Val,Asp: Induces relaxation of rat smooth muscle from tail artery (EC(50)=3.5 nM) and contraction of that from ileum (EC(50)=223 nM), urinary bladder (EC(50)=1.5 uM) and uterus (EC(50)=356 nM). Binds to both bradykinin receptor B1 (BDKRB1) and B2 (BDKRB2); the effects via BDKRB2 are stronger. The chain is [Thr6]-bradykinyl-Val,Asp from Agalychnis dacnicolor (Giant Mexican leaf frog).